Here is a 142-residue protein sequence, read N- to C-terminus: Large ribosomal subunit protein uL13 (142 aa).

This sequence belongs to the universal ribosomal protein uL13 family. In terms of assembly, part of the 50S ribosomal subunit.

Its function is as follows. This protein is one of the early assembly proteins of the 50S ribosomal subunit, although it is not seen to bind rRNA by itself. It is important during the early stages of 50S assembly. The sequence is that of Large ribosomal subunit protein uL13 from Burkholderia mallei (strain NCTC 10247).